Consider the following 520-residue polypeptide: 2-isopropylmalate synthase (520 aa).

Positions 12–274 (IRIFDTTLRD…DSAINTPRIV (263 aa)) constitute a Pyruvate carboxyltransferase domain. Residues Asp-21, His-209, His-211, and Asn-245 each coordinate Mn(2+). Residues 396–520 (RLASMTISDV…VIAGKTAAVA (125 aa)) form a regulatory domain region.

It belongs to the alpha-IPM synthase/homocitrate synthase family. LeuA type 1 subfamily. In terms of assembly, homodimer. Mn(2+) is required as a cofactor.

It is found in the cytoplasm. The catalysed reaction is 3-methyl-2-oxobutanoate + acetyl-CoA + H2O = (2S)-2-isopropylmalate + CoA + H(+). It participates in amino-acid biosynthesis; L-leucine biosynthesis; L-leucine from 3-methyl-2-oxobutanoate: step 1/4. Its function is as follows. Catalyzes the condensation of the acetyl group of acetyl-CoA with 3-methyl-2-oxobutanoate (2-ketoisovalerate) to form 3-carboxy-3-hydroxy-4-methylpentanoate (2-isopropylmalate). The protein is 2-isopropylmalate synthase of Xanthomonas oryzae pv. oryzae (strain KACC10331 / KXO85).